The chain runs to 330 residues: Olfactory receptor 5P73 (330 aa).

The Extracellular segment spans residues 1-28 (MAFLEDGNHTTVTEFFLLGLTDDPVLRD). N-linked (GlcNAc...) asparagine glycosylation occurs at Asn8. Residues 29-49 (ILFIIILCIYLVTVSGNLSTI) traverse the membrane as a helical segment. Residues 50–57 (LLIRVSSQ) are Cytoplasmic-facing. Residues 58–78 (LHHPMYFILSHLASVDIGISS) traverse the membrane as a helical segment. Residues 79-102 (SVTPNMLATFLVKQNTISYIGCSI) are Extracellular-facing. A disulfide bridge connects residues Cys100 and Cys192. A helical transmembrane segment spans residues 103-123 (QFTSAAFFGTVECFLLATMAY). Residues 124 to 136 (DRFVAICNPLLYS) are Cytoplasmic-facing. Residues 137–157 (TKMSTEACIQLVVGSYIQGFL) form a helical membrane-spanning segment. Residues 158 to 199 (NASFFTLSFFSLFFCGPNRINDFYCDFAPLLELSCSDVTVAV) are Extracellular-facing. The chain crosses the membrane as a helical span at residues 200–220 (VITSISAGFITLTTVFVIAIS). The Cytoplasmic segment spans residues 221–240 (YSCIFITIMKMHSTESRCKA). Residues 241-261 (FSTCTSHLTAVILFYGTAIFI) form a helical membrane-spanning segment. Topologically, residues 262–274 (YVMPKSSYSTDQN) are extracellular. Residues 275–295 (KVLSIFYTVVIPMLNPLIYSL) traverse the membrane as a helical segment. Over 296–330 (RNNEIKEALKRHLGKKVFSYGNLFCKTHYNHNYPV) the chain is Cytoplasmic.

It belongs to the G-protein coupled receptor 1 family.

It localises to the cell membrane. Its function is as follows. Potential odorant receptor. The chain is Olfactory receptor 5P73 from Mus musculus (Mouse).